We begin with the raw amino-acid sequence, 446 residues long: Phosphoglucosamine mutase (446 aa).

Residue serine 99 is the Phosphoserine intermediate of the active site. Positions 99, 242, 244, and 246 each coordinate Mg(2+). Position 99 is a phosphoserine (serine 99).

Belongs to the phosphohexose mutase family. Requires Mg(2+) as cofactor. Post-translationally, activated by phosphorylation.

It carries out the reaction alpha-D-glucosamine 1-phosphate = D-glucosamine 6-phosphate. Its function is as follows. Catalyzes the conversion of glucosamine-6-phosphate to glucosamine-1-phosphate. The protein is Phosphoglucosamine mutase of Wolinella succinogenes (strain ATCC 29543 / DSM 1740 / CCUG 13145 / JCM 31913 / LMG 7466 / NCTC 11488 / FDC 602W) (Vibrio succinogenes).